Reading from the N-terminus, the 236-residue chain is Phosphoribosylaminoimidazole-succinocarboxamide synthase (236 aa).

It belongs to the SAICAR synthetase family.

The catalysed reaction is 5-amino-1-(5-phospho-D-ribosyl)imidazole-4-carboxylate + L-aspartate + ATP = (2S)-2-[5-amino-1-(5-phospho-beta-D-ribosyl)imidazole-4-carboxamido]succinate + ADP + phosphate + 2 H(+). The protein operates within purine metabolism; IMP biosynthesis via de novo pathway; 5-amino-1-(5-phospho-D-ribosyl)imidazole-4-carboxamide from 5-amino-1-(5-phospho-D-ribosyl)imidazole-4-carboxylate: step 1/2. The chain is Phosphoribosylaminoimidazole-succinocarboxamide synthase from Pseudomonas putida (strain W619).